Reading from the N-terminus, the 560-residue chain is Nuclear receptor subfamily 5 group A member 2 (560 aa).

The segment at 21 to 55 (IASAPGSETRHSPKREEQLREKRAGLPDRHRRPIP) is disordered. Over residues 28–48 (ETRHSPKREEQLREKRAGLPD) the composition is skewed to basic and acidic residues. Residues 104–175 (EELCPVCGDK…KCIDVGMKLE (72 aa)) constitute a DNA-binding region (nuclear receptor). Zn(2+) contacts are provided by cysteine 107, cysteine 110, cysteine 124, cysteine 127, cysteine 143, cysteine 149, cysteine 159, and cysteine 162. 2 NR C4-type zinc fingers span residues 107–127 (CPVC…CESC) and 143–167 (CIEN…FKKC). The interval 173-188 (KLEAVRADRMRGGRNK) is C-terminal extension (CTE). Residues 189-208 (FGPMYKRDRALKQQKKALIR) carry the FTZ-F1 box motif. Residue lysine 289 forms a Glycyl lysine isopeptide (Lys-Gly) (interchain with G-Cter in SUMO1) linkage. The 240-residue stretch at 319-558 (SIPHLILELL…NLLIEMLHAK (240 aa)) folds into the NR LBD domain. A phospholipid derivative-binding residues include tyrosine 535 and lysine 539. The tract at residues 547-558 (YNNLLIEMLHAK) is AF-2.

The protein belongs to the nuclear hormone receptor family. NR5 subfamily. In terms of assembly, monomer; Binds DNA as a monomer. Interacts with nuclear receptor corepressors NR0B1 and NR0B2; repressing NR5A2 nuclear receptor activity. Interacts with nuclear receptor coactivators CTNNB1, PPARGC1A and NCOA2; interaction takes place following ligand-binding and promotes target gene activation. Interacts (when sumoylated) with GPS2; interaction with GPS2 onto hepatic acute phase protein promoters prevents N-Cor corepressor complex dissociation. Interacts with HNF1A. Interacts with GRIP1. In terms of processing, sumoylated by SUMO1 at Lys-289 during the hepatic acute phase response, leading to promote interaction with GPS2 and prevent N-Cor corepressor complex dissociation.

The protein resides in the nucleus. It localises to the chromosome. Its function is as follows. Orphan nuclear receptor that binds DNA as a monomer to the 5'-TCAAGGCCA-3' sequence and controls expression of target genes: regulates key biological processes, such as early embryonic development, cholesterol and bile acid synthesis pathways, as well as liver and pancreas morphogenesis. Ligand-binding causes conformational change which causes recruitment of coactivators, promoting target gene activation. The specific ligand is unknown, but specific phospholipids, such as phosphatidylethanolamine, phosphatidylserine, dilauroyl phosphatidylcholine and diundecanoyl phosphatidylcholine can act as ligand in vitro. Acts as a pioneer transcription factor, which unwraps target DNA from histones and elicits local opening of closed chromatin. Plays a central role during preimplantation stages of embryonic development. Plays a minor role in zygotic genome activation (ZGA) by regulating a small set of two-cell stage genes. Plays a major role in morula development (2-16 cells embryos) by acting as a master regulator at the 8-cell stage, controlling expression of lineage-specifying transcription factors and genes involved in mitosis, telomere maintenance and DNA repair. Zygotic NR5A2 binds to both closed and open chromatin with other transcription factors, often at SINE B1/Alu repeats DNA elements, promoting chromatin accessibility at nearby regulatory regions. Also involved in the epiblast stage of development and embryonic stem cell pluripotency, by promoting expression of POU5F1/OCT4. Regulates other processes later in development, such as formation of connective tissue in lower jaw and middle ear, neural stem cell differentiation, ovarian follicle development and Sertoli cell differentiation. Involved in exocrine pancreas development and acinar cell differentiation. Acts as an essential transcriptional regulator of lipid metabolism. Key regulator of cholesterol 7-alpha-hydroxylase gene (CYP7A) expression in liver. Activates the transcription of CYP2C38. Also acts as a negative regulator of inflammation in different organs, such as intestine, liver and pancreas. Protects against intestinal inflammation via its ability to regulate glucocorticoid production. Plays an anti-inflammatory role during the hepatic acute phase response by acting as a corepressor: inhibits the hepatic acute phase response by preventing dissociation of the N-Cor corepressor complex. Acts as a regulator of immunity by promoting lymphocyte T-cell development, proliferation and effector functions. Also involved in resolution of endoplasmic reticulum stress in the liver. The polypeptide is Nuclear receptor subfamily 5 group A member 2 (Mus musculus (Mouse)).